The following is a 385-amino-acid chain: Calcium/calmodulin-dependent protein kinase type 1D (385 aa).

Residues 23–279 (FEFKETLGTG…CEQAARHPWI (257 aa)) form the Protein kinase domain. ATP-binding positions include 29–37 (LGTGAFSEV) and Lys52. Residue Lys113 forms a Glycyl lysine isopeptide (Lys-Gly) (interchain with G-Cter in SUMO2) linkage. The residue at position 122 (Ser122) is a Phosphoserine. Catalysis depends on Asp144, which acts as the Proton acceptor. The residue at position 180 (Thr180) is a Phosphothreonine; by CaMKK1 and CaMKK2. The interval 279 to 319 (IAGDTALSKNIHESVSAQIRKNFAKSKWRQAFNATAVVRHM) is autoinhibitory domain. Residues 299–320 (KNFAKSKWRQAFNATAVVRHMR) are calmodulin-binding. The Nuclear export signal motif lies at 318 to 324 (HMRRLQL). A disordered region spans residues 363 to 385 (VAGVGAERRPRPTTVTTGHTGSK). Polar residues predominate over residues 375-385 (TTVTTGHTGSK).

It belongs to the protein kinase superfamily. CAMK Ser/Thr protein kinase family. CaMK subfamily. In terms of tissue distribution, expressed ubiquitously with high levels in brain and low levels in kidney. Isoform 2 is highly expressed in brain compared to other tissues. In hematopoietic cell lines predominant expression was detected in T and EC cells.

It is found in the cytoplasm. The protein localises to the nucleus. It catalyses the reaction L-seryl-[protein] + ATP = O-phospho-L-seryl-[protein] + ADP + H(+). The enzyme catalyses L-threonyl-[protein] + ATP = O-phospho-L-threonyl-[protein] + ADP + H(+). Activated by Ca(2+)/calmodulin. Binding of calmodulin results in conformational change that relieves intrasteric autoinhibition and allows phosphorylation of Thr-180 within the activation loop by CaMKK1 or CaMKK2. Phosphorylation of Thr-180 results in several fold increase in total activity. Unlike CaMK4, may be unable to exhibit autonomous activity after Ca(2+)/calmodulin activation. Functionally, calcium/calmodulin-dependent protein kinase that operates in the calcium-triggered CaMKK-CaMK1 signaling cascade and, upon calcium influx, activates CREB-dependent gene transcription, regulates calcium-mediated granulocyte function and respiratory burst and promotes basal dendritic growth of hippocampal neurons. In neutrophil cells, required for cytokine-induced proliferative responses and activation of the respiratory burst. Activates the transcription factor CREB1 in hippocampal neuron nuclei. May play a role in apoptosis of erythroleukemia cells. In vitro, phosphorylates transcription factor CREM isoform Beta. Isoform 1 but not isoform 2 activates CREB1. This is Calcium/calmodulin-dependent protein kinase type 1D (Camk1d) from Mus musculus (Mouse).